The primary structure comprises 219 residues: MSIQVFCDFDGTITNNDNIMSIMEKFAPPEAEEVKNRILSQELSIQEGVSQLFQLIPTNLHDEIIQFLIETAEIRNGFHEFIQFVNENNISFYVISGGMDFFVYPLLQGLIPKEQIYCNETDFSNEYITVNWPHPCDRLCQNHCGLCKSSLIRKLSDTNDFHIVIGDSITDLQAAKQADKVFARDFLITKCEENHISYTPFETFHDVQTELKHLLGVKL.

The protein belongs to the HAD-like hydrolase superfamily. MtnX family.

It catalyses the reaction 2-hydroxy-5-methylsulfanyl-3-oxopent-1-enyl phosphate + H2O = 1,2-dihydroxy-5-(methylsulfanyl)pent-1-en-3-one + phosphate. It functions in the pathway amino-acid biosynthesis; L-methionine biosynthesis via salvage pathway; L-methionine from S-methyl-5-thio-alpha-D-ribose 1-phosphate: step 4/6. Functionally, dephosphorylates 2-hydroxy-3-keto-5-methylthiopentenyl-1-phosphate (HK-MTPenyl-1-P) yielding 1,2-dihydroxy-3-keto-5-methylthiopentene (DHK-MTPene). The sequence is that of 2-hydroxy-3-keto-5-methylthiopentenyl-1-phosphate phosphatase from Bacillus cereus (strain ZK / E33L).